The primary structure comprises 637 residues: Chaperone protein HtpG (637 aa).

An a; substrate-binding region spans residues 1–345 (MSQQETHGFQ…SNDLPLNVSR (345 aa)). Residues 346–562 (EILQDNHITK…EGEMSTQMIK (217 aa)) are b. The interval 563–637 (LMQAAGQPVP…MNQMLLANMK (75 aa)) is c.

The protein belongs to the heat shock protein 90 family. As to quaternary structure, homodimer.

The protein resides in the cytoplasm. Molecular chaperone. Has ATPase activity. The polypeptide is Chaperone protein HtpG (Shewanella putrefaciens (strain CN-32 / ATCC BAA-453)).